A 735-amino-acid polypeptide reads, in one-letter code: Ion-translocating oxidoreductase complex subunit C (735 aa).

2 4Fe-4S ferredoxin-type domains span residues methionine 368–tyrosine 397 and lysine 407–phenylalanine 436. Residues cysteine 377, cysteine 380, cysteine 383, cysteine 387, cysteine 416, cysteine 419, cysteine 422, and cysteine 426 each contribute to the [4Fe-4S] cluster site. Residues glutamine 534–lysine 711 form a disordered region.

It belongs to the 4Fe4S bacterial-type ferredoxin family. RnfC subfamily. The complex is composed of six subunits: RsxA, RsxB, RsxC, RsxD, RsxE and RsxG. [4Fe-4S] cluster is required as a cofactor.

Its subcellular location is the cell inner membrane. Its function is as follows. Part of a membrane-bound complex that couples electron transfer with translocation of ions across the membrane. Required to maintain the reduced state of SoxR. This is Ion-translocating oxidoreductase complex subunit C from Salmonella paratyphi A (strain ATCC 9150 / SARB42).